The primary structure comprises 363 residues: NADH-quinone oxidoreductase subunit H (363 aa).

10 helical membrane-spanning segments follow: residues 29-49 (VLKI…YVVW), 62-82 (GPMY…KLLF), 94-114 (AIFV…WAVV), 127-147 (VGLL…ILAG), 166-186 (VVSY…AAGS), 202-222 (FFDW…VSGV), 239-257 (IVAG…LFFL), 264-286 (ILVS…QGWV), 293-313 (LIDW…LFFA), and 339-359 (FIPL…SGVI).

It belongs to the complex I subunit 1 family. NDH-1 is composed of 14 different subunits. Subunits NuoA, H, J, K, L, M, N constitute the membrane sector of the complex.

The protein localises to the cell inner membrane. The enzyme catalyses a quinone + NADH + 5 H(+)(in) = a quinol + NAD(+) + 4 H(+)(out). In terms of biological role, NDH-1 shuttles electrons from NADH, via FMN and iron-sulfur (Fe-S) centers, to quinones in the respiratory chain. The immediate electron acceptor for the enzyme in this species is believed to be ubiquinone. Couples the redox reaction to proton translocation (for every two electrons transferred, four hydrogen ions are translocated across the cytoplasmic membrane), and thus conserves the redox energy in a proton gradient. This subunit may bind ubiquinone. This chain is NADH-quinone oxidoreductase subunit H, found in Xylella fastidiosa (strain Temecula1 / ATCC 700964).